Here is a 184-residue protein sequence, read N- to C-terminus: LPS-assembly lipoprotein LptE (184 aa).

The signal sequence occupies residues Met1–Gly19. A lipid anchor (N-palmitoyl cysteine) is attached at Cys20. Cys20 carries S-diacylglycerol cysteine lipidation.

This sequence belongs to the LptE lipoprotein family. As to quaternary structure, component of the lipopolysaccharide transport and assembly complex. Interacts with LptD.

The protein localises to the cell outer membrane. Functionally, together with LptD, is involved in the assembly of lipopolysaccharide (LPS) at the surface of the outer membrane. Required for the proper assembly of LptD. Binds LPS and may serve as the LPS recognition site at the outer membrane. This Pectobacterium atrosepticum (strain SCRI 1043 / ATCC BAA-672) (Erwinia carotovora subsp. atroseptica) protein is LPS-assembly lipoprotein LptE.